Here is a 153-residue protein sequence, read N- to C-terminus: 3-hydroxyacyl-[acyl-carrier-protein] dehydratase FabZ (153 aa).

His54 is an active-site residue.

Belongs to the thioester dehydratase family. FabZ subfamily.

The protein localises to the cytoplasm. It catalyses the reaction a (3R)-hydroxyacyl-[ACP] = a (2E)-enoyl-[ACP] + H2O. Involved in unsaturated fatty acids biosynthesis. Catalyzes the dehydration of short chain beta-hydroxyacyl-ACPs and long chain saturated and unsaturated beta-hydroxyacyl-ACPs. In Shewanella frigidimarina (strain NCIMB 400), this protein is 3-hydroxyacyl-[acyl-carrier-protein] dehydratase FabZ.